The sequence spans 147 residues: Nucleoside diphosphate kinase (147 aa).

ATP-binding residues include Lys-9, Phe-57, Arg-85, Thr-91, Arg-102, and Asn-112. The Pros-phosphohistidine intermediate role is filled by His-115.

This sequence belongs to the NDK family. As to quaternary structure, homotetramer. Requires Mg(2+) as cofactor.

It localises to the cytoplasm. It catalyses the reaction a 2'-deoxyribonucleoside 5'-diphosphate + ATP = a 2'-deoxyribonucleoside 5'-triphosphate + ADP. The enzyme catalyses a ribonucleoside 5'-diphosphate + ATP = a ribonucleoside 5'-triphosphate + ADP. In terms of biological role, major role in the synthesis of nucleoside triphosphates other than ATP. The ATP gamma phosphate is transferred to the NDP beta phosphate via a ping-pong mechanism, using a phosphorylated active-site intermediate. The protein is Nucleoside diphosphate kinase of Thermosipho africanus (strain TCF52B).